Reading from the N-terminus, the 757-residue chain is Glutathione biosynthesis bifunctional protein GshAB (757 aa).

The tract at residues 1-337 (MNIQQIVKEK…LGRARLGEVA (337 aa)) is glutamate--cysteine ligase. The ATP-grasp domain occupies 494 to 757 (KKVLAKAGFN…VLGMLFPELV (264 aa)). Position 521–580 (521–580 (PLFEGKAVVIKPKSTNFGLGISIFQQGVHDKADFAKAVEIAFREDKEVMVEDYLVGTEYR)) interacts with ATP. Residues Asp702, Glu723, and Asn725 each contribute to the Mg(2+) site. Mn(2+)-binding residues include Asp702, Glu723, and Asn725.

The protein in the N-terminal section; belongs to the glutamate--cysteine ligase type 1 family. Type 2 subfamily. Monomer. Mg(2+) serves as cofactor. It depends on Mn(2+) as a cofactor.

The enzyme catalyses L-cysteine + L-glutamate + ATP = gamma-L-glutamyl-L-cysteine + ADP + phosphate + H(+). The catalysed reaction is gamma-L-glutamyl-L-cysteine + glycine + ATP = glutathione + ADP + phosphate + H(+). The protein operates within sulfur metabolism; glutathione biosynthesis; glutathione from L-cysteine and L-glutamate: step 1/2. It participates in sulfur metabolism; glutathione biosynthesis; glutathione from L-cysteine and L-glutamate: step 2/2. Its function is as follows. Synthesizes glutathione from L-glutamate and L-cysteine via gamma-L-glutamyl-L-cysteine. This chain is Glutathione biosynthesis bifunctional protein GshAB, found in Mannheimia succiniciproducens (strain KCTC 0769BP / MBEL55E).